The sequence spans 1852 residues: Voltage-dependent L-type calcium channel subunit alpha-1S (1852 aa).

Residues 1-23 form a disordered region; that stretch reads MEPPSPQDEGLRKKQPKKPVPEI. The Cytoplasmic segment spans residues 1–51; sequence MEPPSPQDEGLRKKQPKKPVPEILPRPPRALFCLTLQNPLRKACISIVEWK. One copy of the I repeat lies at 38–337; sequence NPLRKACISI…LVLGVLSGEF (300 aa). Residues 52 to 70 traverse the membrane as a helical segment; the sequence is PFETIILLTIFANCVALAV. The Extracellular segment spans residues 71 to 85; it reads YLPMPEDDNNTLNLG. Asn-79 carries an N-linked (GlcNAc...) asparagine glycan. A helical membrane pass occupies residues 86 to 106; it reads LEKLEYFFLIVFSIEAAMKII. The Cytoplasmic portion of the chain corresponds to 107–115; the sequence is AYGFLFHQD. The helical transmembrane segment at 116-136 threads the bilayer; that stretch reads AYLRSGWNVLDFIIVFLGVFT. The Extracellular portion of the chain corresponds to 137–160; that stretch reads VILEQVNIIQTNTAPMSSKGAGLD. Residues 161–179 form a helical membrane-spanning segment; it reads VKALRAFRVLRPLRLVSGV. Over 180 to 196 the chain is Cytoplasmic; that stretch reads PSLQVVLNSIFKAMLPL. Residues 197–218 form a helical membrane-spanning segment; it reads FHIALLVLFMVIIYAIIGLELF. At 219–279 the chain is on the extracellular side; the sequence is KGKMHKTCYF…HGITHFDNFG (61 aa). 2 disulfide bridges follow: Cys-226–Cys-254 and Cys-245–Cys-261. An N-linked (GlcNAc...) asparagine glycan is attached at Asn-257. An intramembrane region (pore-forming) is located at residues 280–301; the sequence is FSMLTVYQCISMEGWTDVLYWV. A Selectivity filter of repeat I motif is present at residues 290–293; sequence SMEG. Glu-292 lines the Ca(2+) pocket. Topologically, residues 302–309 are extracellular; that stretch reads NDAIGNEW. The helical transmembrane segment at 310 to 330 threads the bilayer; the sequence is PWIYFVTLILLGSFFILNLVL. Residues 331–432 lie on the Cytoplasmic side of the membrane; it reads GVLSGEFTKE…WKCHDLVKSK (102 aa). The tract at residues 357–374 is binding to the beta subunit; that stretch reads QQLEEDLRGYMSWITQGE. Phosphoserine is present on residues Ser-393 and Ser-397. An II repeat occupies 418–664; that stretch reads NRVFRWKCHD…VFLAIAVDNL (247 aa). Residues 433–451 form a helical membrane-spanning segment; sequence VFYWLVILIVALNTLSIAS. At 452–462 the chain is on the extracellular side; that stretch reads EHHNQPLWLTH. The helical transmembrane segment at 463-483 threads the bilayer; it reads LQDVANRVLLTLFTIEMLMKM. Topologically, residues 484–494 are cytoplasmic; sequence YGLGLRQYFMS. A helical transmembrane segment spans residues 495–514; the sequence is IFNRFDCFVVCSGILEILLV. At 515–523 the chain is on the extracellular side; it reads ESGAMSPLG. A helical transmembrane segment spans residues 524–542; that stretch reads ISVLRCIRLLRLFKITKYW. Residues 543–561 are Cytoplasmic-facing; sequence TSLSNLVASLLNSIRSIAS. Residues 562 to 581 traverse the membrane as a helical segment; it reads LLLLLFLFIIIFALLGMQLF. Over 582-601 the chain is Extracellular; it reads GGRYDFEDTEVRRSNFDNFP. The segment at residues 602–623 is an intramembrane region (pore-forming); sequence QALISVFQVLTGEDWNSVMYNG. The short motif at 612 to 615 is the Selectivity filter of repeat II element; sequence TGED. Residue Glu-614 coordinates Ca(2+). Topologically, residues 624–633 are extracellular; the sequence is IMAYGGPTYP. A helical membrane pass occupies residues 634–653; sequence GVLVCIYFIILFVCGNYILL. At 654 to 799 the chain is on the cytoplasmic side; it reads NVFLAIAVDN…VLCHRIVNAT (146 aa). Disordered stretches follow at residues 675–712 and 731–757; these read KAKA…SKGE and EVKD…VSPR. Phosphoserine; by PKA is present on Ser-687. Positions 690–711 are enriched in basic and acidic residues; the sequence is LPDKSEEERATVTKKLEQKSKG. Positions 742–751 are enriched in acidic residues; the sequence is PGDDEEDEPE. An III repeat occupies 768-1068; sequence EKAVPIPEAS…IFVGFVIVTF (301 aa). The helical transmembrane segment at 800-818 threads the bilayer; it reads WFTNFILLFILLSSAALAA. Residues 819 to 830 are Extracellular-facing; sequence EDPIRADSMRNQ. The chain crosses the membrane as a helical span at residues 831-850; sequence ILEYFDYVFTAVFTVEIVLK. Topologically, residues 851–866 are cytoplasmic; that stretch reads MTTYGAFLHKGSFCRN. Residues 867-885 traverse the membrane as a helical segment; sequence YFNILDLLVVAVSLISMGL. The Extracellular segment spans residues 886 to 892; it reads ESSAISV. Residues 893-911 form a helical membrane-spanning segment; sequence VKILRVLRVLRPLRAINRA. Residues 912 to 930 are Cytoplasmic-facing; sequence KGLKHVVQCVFVAIRTIGN. Residues 931–950 form a helical membrane-spanning segment; sequence IVLVTTLLQFMFACIGVQLF. Topologically, residues 951-1000 are extracellular; it reads KGKFYSCNDLSKMTEEECRGYYYIYKDGDPTQIELRPRQWIHNDFHFDNV. Cysteines 957 and 968 form a disulfide. Residues 988–1077 form a dihydropyridine binding region; that stretch reads RQWIHNDFHF…FQEQGETEYK (90 aa). The pore-forming intramembrane region spans 1001 to 1021; sequence LSAMMSLFTVSTFEGWPQLLY. The Selectivity filter of repeat III motif lies at 1012–1015; that stretch reads TFEG. Glu-1014 provides a ligand contact to Ca(2+). At 1022 to 1038 the chain is on the extracellular side; sequence KAIDSNEEDTGPVYNNR. The chain crosses the membrane as a helical span at residues 1039–1060; it reads VEMAIFFIIYIILIAFFMMNIF. Over 1061-1118 the chain is Cytoplasmic; sequence VGFVIVTFQEQGETEYKNCELDKNQRQCVQYALKARPLRCYIPKNPYQYQVWYVVTSS. One copy of the IV repeat lies at 1105–1384; that stretch reads NPYQYQVWYV…LFVAVIMDNF (280 aa). Residues 1119–1140 traverse the membrane as a helical segment; sequence YFEYLMFALIMLNTICLGMQHY. An N-linked (GlcNAc...) asparagine glycan is attached at Asn-1141. At 1141 to 1148 the chain is on the extracellular side; the sequence is NQSEQMNH. Residues 1149–1170 form a helical membrane-spanning segment; it reads ISDILNVAFTIIFTLEMVLKLI. Over 1171-1180 the chain is Cytoplasmic; it reads AFKPRGYFGD. A helical transmembrane segment spans residues 1181 to 1200; sequence PWNVFDFLIVIGSIIDVILS. The Extracellular portion of the chain corresponds to 1201–1231; sequence EIDTFLASSGGLYCLGGGCGNVDPDESARIS. The helical transmembrane segment at 1232–1250 threads the bilayer; sequence SAFFRLFRVMRLVKLLNRA. The Cytoplasmic segment spans residues 1251-1268; the sequence is EGVRTLLWTFIKSFQALP. A helical membrane pass occupies residues 1269–1289; that stretch reads YVALLIVMLFFIYAVIGMQMF. The Extracellular portion of the chain corresponds to 1290–1311; that stretch reads GKIAMVDGTQINRNNNFQTFPQ. The segment at residues 1312-1330 is an intramembrane region (pore-forming); it reads AVLLLFRCATGEAWQEILL. Positions 1321–1324 match the Selectivity filter of repeat IV motif; the sequence is TGEA. The Extracellular segment spans residues 1331-1356; it reads ACSYGKLCDPESDYAPGEEHTCGTNF. The dihydropyridine binding stretch occupies residues 1337-1403; that stretch reads LCDPESDYAP…LGPHHLDEFK (67 aa). A disulfide bond links Cys-1338 and Cys-1352. Phenylalkylamine binding stretches follow at residues 1349 to 1391 and 1349 to 1392; these read EHTC…TRDW and EHTC…RDWS. The chain crosses the membrane as a helical span at residues 1357–1381; it reads AYYYFISFYMLCAFLIINLFVAVIM. The Cytoplasmic portion of the chain corresponds to 1382–1852; it reads DNFDYLTRDW…PEGGAVPWEP (471 aa). The tract at residues 1522–1542 is interaction with calmodulin; it reads KFYATFLIQEHFRKFMKRQEE. Position 1575 is a phosphoserine; by PKA and CAMK2 (Ser-1575). Residue Thr-1579 is modified to Phosphothreonine. Ser-1617 carries the post-translational modification Phosphoserine; by PKA. Disordered regions lie at residues 1702-1721 and 1727-1762; these read GPLS…HVDK and TQRG…PTSR. Residues 1747–1757 are compositionally biased toward basic and acidic residues; the sequence is KAEHPVQKEGK.

This sequence belongs to the calcium channel alpha-1 subunit (TC 1.A.1.11) family. CACNA1S subfamily. Component of a calcium channel complex consisting of a pore-forming alpha subunit (CACNA1S) and the ancillary subunits CACNB1 or CACNB2, CACNG1 and CACNA2D1. The channel complex contains alpha, beta, gamma and delta subunits in a 1:1:1:1 ratio, i.e. it contains either CACNB1 or CACNB2. CACNA1S channel activity is modulated by the auxiliary subunits (CACNB1 or CACNB2, CACNG1 and CACNA2D1). Interacts with DYSF and JSRP1. Interacts with RYR1. Interacts with STAC, STAC2 and STAC3 (via their SH3 domains). Interacts with CALM. In terms of processing, the alpha-1S subunit is found in two isoforms in the skeletal muscle: a minor form of 212 kDa containing the complete amino acid sequence, and a major form of 190 kDa derived from the full-length form by post-translational proteolysis close to Phe-1690. Phosphorylated. Phosphorylation by PKA activates the calcium channel. Both the minor and major forms are phosphorylated in vitro by PKA. Phosphorylation at Ser-1575 is involved in beta-adrenergic-mediated regulation of the channel.

It localises to the cell membrane. It is found in the sarcolemma. Its subcellular location is the T-tubule. It catalyses the reaction Ca(2+)(in) = Ca(2+)(out). Channel activity is blocked by dihydropyridines (DHP), phenylalkylamines, and by benzothiazepines. Its function is as follows. Pore-forming, alpha-1S subunit of the voltage-gated calcium channel that gives rise to L-type calcium currents in skeletal muscle. Calcium channels containing the alpha-1S subunit play an important role in excitation-contraction coupling in skeletal muscle via their interaction with RYR1, which triggers Ca(2+) release from the sarcplasmic reticulum and ultimately results in muscle contraction. Long-lasting (L-type) calcium channels belong to the 'high-voltage activated' (HVA) group. The chain is Voltage-dependent L-type calcium channel subunit alpha-1S (Cacna1s) from Mus musculus (Mouse).